A 391-amino-acid polypeptide reads, in one-letter code: Protein CAJ1 (391 aa).

Residues 4-73 (ETEYYDILGI…RSKYDQFGKE (70 aa)) enclose the J domain. Positions 119–161 (KEDEEGTAATETEKADESTDGGMVKHDTNKAESLKKDKLSKEQ) are disordered. Positions 129-161 (ETEKADESTDGGMVKHDTNKAESLKKDKLSKEQ) are enriched in basic and acidic residues. A Glycyl lysine isopeptide (Lys-Gly) (interchain with G-Cter in ubiquitin) cross-link involves residue Lys-132.

In Saccharomyces cerevisiae (strain ATCC 204508 / S288c) (Baker's yeast), this protein is Protein CAJ1 (CAJ1).